We begin with the raw amino-acid sequence, 1131 residues long: Translation initiation factor IF-2 (1131 aa).

A disordered region spans residues 49-542 (KFKGSVSSNE…AFIMPKPQQS (494 aa)). Positions 60-75 (KSIDNGKASRVEKPEK) are enriched in basic and acidic residues. 2 stretches are compositionally biased toward polar residues: residues 76–88 (NNSV…QTPS) and 108–125 (SEQN…NIQS). Residues 127 to 138 (GDRKYQHTDRRP) show a composition bias toward basic and acidic residues. Polar residues predominate over residues 139–152 (QGNNGEGPQTSTNS). 2 stretches are compositionally biased toward basic and acidic residues: residues 164-180 (GDRR…RPYN) and 223-239 (GDRR…RPYN). Residues 411-436 (GQGGYGGRPQGQGSYGGRPQGQGGYA) show a composition bias toward gly residues. Composition is skewed to basic and acidic residues over residues 450 to 479 (KDFD…KSSI) and 487 to 530 (LTKE…DPNR). One can recognise a tr-type G domain in the interval 632–801 (KRPPVVCVMG…ILTAEMGELK (170 aa)). Positions 641–648 (GHVDHGKT) are G1. 641–648 (GHVDHGKT) contacts GTP. The segment at 666 to 670 (GITQH) is G2. The interval 687-690 (DTPG) is G3. GTP is bound by residues 687-691 (DTPGH) and 741-744 (NKID). Residues 741-744 (NKID) form a G4 region. The G5 stretch occupies residues 777–779 (SAH).

The protein belongs to the TRAFAC class translation factor GTPase superfamily. Classic translation factor GTPase family. IF-2 subfamily.

The protein localises to the cytoplasm. Its function is as follows. One of the essential components for the initiation of protein synthesis. Protects formylmethionyl-tRNA from spontaneous hydrolysis and promotes its binding to the 30S ribosomal subunits. Also involved in the hydrolysis of GTP during the formation of the 70S ribosomal complex. In Lachnoclostridium phytofermentans (strain ATCC 700394 / DSM 18823 / ISDg) (Clostridium phytofermentans), this protein is Translation initiation factor IF-2.